A 77-amino-acid chain; its full sequence is Protein RALF-like 17 (77 aa).

Positions 1 to 29 (MAASREFIICCFLTLLLCNFFMRVESGAA) are cleaved as a signal peptide. Cysteines 37 and 51 form a disulfide.

It belongs to the plant rapid alkalinization factor (RALF) family.

The protein resides in the secreted. Functionally, cell signaling peptide that may regulate plant stress, growth, and development. Mediates a rapid alkalinization of extracellular space by mediating a transient increase in the cytoplasmic Ca(2+) concentration leading to a calcium-dependent signaling events through a cell surface receptor and a concomitant activation of some intracellular mitogen-activated protein kinases. The chain is Protein RALF-like 17 (RALFL17) from Arabidopsis thaliana (Mouse-ear cress).